We begin with the raw amino-acid sequence, 401 residues long: tRNA pseudouridine synthase Pus10 (401 aa).

The THUMP domain maps to 64 to 195; sequence ALAKSGHRES…DGSVSVEVMP (132 aa).

Belongs to the pseudouridine synthase Pus10 family.

The catalysed reaction is uridine(54) in tRNA = pseudouridine(54) in tRNA. It carries out the reaction uridine(55) in tRNA = pseudouridine(55) in tRNA. Its function is as follows. Responsible for synthesis of pseudouridine from uracil-54 and uracil-55 in the psi GC loop of transfer RNAs. The polypeptide is tRNA pseudouridine synthase Pus10 (Caldivirga maquilingensis (strain ATCC 700844 / DSM 13496 / JCM 10307 / IC-167)).